The sequence spans 312 residues: Undecaprenyl-diphosphatase (312 aa).

Helical transmembrane passes span 74–94 (GVAF…WYFW), 122–142 (VSIG…KVFI), 154–174 (VAIA…ERIG), 183–203 (LDIR…IPGV), 226–246 (FSFL…LKTL), 254–274 (VGLV…YIAI), and 288–308 (IFIW…ISGV).

Belongs to the UppP family.

Its subcellular location is the cell inner membrane. It carries out the reaction di-trans,octa-cis-undecaprenyl diphosphate + H2O = di-trans,octa-cis-undecaprenyl phosphate + phosphate + H(+). Functionally, catalyzes the dephosphorylation of undecaprenyl diphosphate (UPP). Confers resistance to bacitracin. This chain is Undecaprenyl-diphosphatase, found in Trichodesmium erythraeum (strain IMS101).